We begin with the raw amino-acid sequence, 324 residues long: Zinc transporter ZIP1 (324 aa).

The Extracellular segment spans residues 1–30; that stretch reads MGPWGEPELLVWRPEAVASEPSVPVGLEVK. The helical transmembrane segment at 31–51 threads the bilayer; that stretch reads LGALVLLLLLTLICSLVPVCV. Over 52–68 the chain is Cytoplasmic; sequence LRRSGANHEASASGQKA. A helical transmembrane segment spans residues 69–89; the sequence is LSLVSCFAGGVFLATCLLDLL. The Extracellular segment spans residues 90–104; sequence PDYLAAIDEALEALH. A helical transmembrane segment spans residues 105 to 125; the sequence is VTLQFPLQEFILAMGFFLVLV. At 126–179 the chain is on the cytoplasmic side; sequence MEQITLAYKEQTSPPHPEETRALLGTVNGGPQHWHDGPGIPQAGGTPAAPSALR. The helical transmembrane segment at 180-200 threads the bilayer; it reads ACVLVFSLALHSVFEGLAVGL. Topologically, residues 201–206 are extracellular; the sequence is QRDRAR. Residues 207–227 form a helical membrane-spanning segment; that stretch reads AMELCLALLLHKGILAVSLSL. The Cytoplasmic portion of the chain corresponds to 228 to 237; that stretch reads RLLQSHLRVQ. A helical membrane pass occupies residues 238 to 258; sequence VVAGCGILFSCMTPLGIGLGA. Over 259–272 the chain is Extracellular; the sequence is ALAESAGPLHQLAQ. The chain crosses the membrane as a helical span at residues 273 to 293; the sequence is SVLEGMAAGTFLYITFLEILP. At 294–303 the chain is on the cytoplasmic side; the sequence is QELATSEQRI. A helical membrane pass occupies residues 304–324; the sequence is LKVILLLAGFALLTGLLFVQI.

Belongs to the ZIP transporter (TC 2.A.5) family. Ubiquitous, except in the pancreas. Highest levels seen in kidney, salivary gland and placenta.

Its subcellular location is the cell membrane. It localises to the endoplasmic reticulum membrane. It carries out the reaction Zn(2+)(in) = Zn(2+)(out). Transporter for the divalent cation Zn(2+). Mediates the influx of Zn(2+) into cells from extracellular space. The sequence is that of Zinc transporter ZIP1 (Slc39a1) from Mus musculus (Mouse).